Consider the following 122-residue polypeptide: Large ribosomal subunit protein uL14 (122 aa).

Belongs to the universal ribosomal protein uL14 family. In terms of assembly, part of the 50S ribosomal subunit. Forms a cluster with proteins L3 and L19. In the 70S ribosome, L14 and L19 interact and together make contacts with the 16S rRNA in bridges B5 and B8.

Binds to 23S rRNA. Forms part of two intersubunit bridges in the 70S ribosome. The sequence is that of Large ribosomal subunit protein uL14 from Amoebophilus asiaticus (strain 5a2).